The primary structure comprises 143 residues: HTH-type transcriptional regulator MntR (143 aa).

Residues 1–63 (MPTPSMEDYL…YERYRGLVLT (63 aa)) form the HTH dtxR-type domain. Mn(2+) contacts are provided by aspartate 8, glutamate 11, histidine 77, glutamate 99, glutamate 102, and histidine 103.

The protein belongs to the DtxR/MntR family. In terms of assembly, homodimer.

It localises to the cytoplasm. DNA binding is strongly activated by Mn(2+). Central regulator of manganese homeostasis. The polypeptide is HTH-type transcriptional regulator MntR (Shouchella clausii (strain KSM-K16) (Alkalihalobacillus clausii)).